The following is a 356-amino-acid chain: Cyanide hydratase (356 aa).

The region spanning 15-290 (FKVAAVQAEP…EVVLYANISL (276 aa)) is the CN hydrolase domain. Glu-55 acts as the Proton acceptor in catalysis. Residue Lys-137 is part of the active site. The Nucleophile role is filled by Cys-172. A disordered region spans residues 331-356 (DEQAASKAQQAEIDNAGKGSIVPSKL).

The protein belongs to the carbon-nitrogen hydrolase superfamily. Nitrilase family.

It catalyses the reaction formamide = hydrogen cyanide + H2O. Its function is as follows. Catalyzes the hydration of cyanide to formamide. Degradation of cyanide may be important for plant pathogenic fungi in infection of cyanogenic plants. The sequence is that of Cyanide hydratase from Armillaria gallica (Bulbous honey fungus).